Reading from the N-terminus, the 114-residue chain is Aspartate 1-decarboxylase (114 aa).

Residue S25 is the Schiff-base intermediate with substrate; via pyruvic acid of the active site. Position 25 is a pyruvic acid (Ser) (S25). Residue T57 participates in substrate binding. Y58 (proton donor) is an active-site residue. Position 71-73 (71-73 (GAA)) interacts with substrate.

Belongs to the PanD family. Heterooctamer of four alpha and four beta subunits. The cofactor is pyruvate. Is synthesized initially as an inactive proenzyme, which is activated by self-cleavage at a specific serine bond to produce a beta-subunit with a hydroxyl group at its C-terminus and an alpha-subunit with a pyruvoyl group at its N-terminus.

The protein localises to the cytoplasm. It catalyses the reaction L-aspartate + H(+) = beta-alanine + CO2. It functions in the pathway cofactor biosynthesis; (R)-pantothenate biosynthesis; beta-alanine from L-aspartate: step 1/1. Catalyzes the pyruvoyl-dependent decarboxylation of aspartate to produce beta-alanine. This Campylobacter hominis (strain ATCC BAA-381 / DSM 21671 / CCUG 45161 / LMG 19568 / NCTC 13146 / CH001A) protein is Aspartate 1-decarboxylase.